The chain runs to 129 residues: Small ribosomal subunit protein uS11 (129 aa).

It belongs to the universal ribosomal protein uS11 family. As to quaternary structure, part of the 30S ribosomal subunit. Interacts with proteins S7 and S18. Binds to IF-3.

Its function is as follows. Located on the platform of the 30S subunit, it bridges several disparate RNA helices of the 16S rRNA. Forms part of the Shine-Dalgarno cleft in the 70S ribosome. This is Small ribosomal subunit protein uS11 from Mannheimia succiniciproducens (strain KCTC 0769BP / MBEL55E).